A 759-amino-acid polypeptide reads, in one-letter code: Short transient receptor potential channel 1 (759 aa).

A disordered region spans residues 1-30 (MMAALYPSTDLSGASSSSLPSSPSSSSPNE). The Cytoplasmic portion of the chain corresponds to 1–352 (MMAALYPSTD…GRIIHTPFMK (352 aa)). Low complexity predominate over residues 15–28 (SSSSLPSSPSSSSP). ANK repeat units follow at residues 46-75 (LNEK…SGDL), 83-112 (LGRN…QKLM), and 124-153 (MDVA…SLPK). A helical membrane pass occupies residues 353–373 (FIIHGASYFTFLLLLNLYSLV). Over 374-381 (YNEDKKNT) the chain is Extracellular. Residues 382 to 402 (MGPALERIDYLLILWIIGMIW) form a helical membrane-spanning segment. The Cytoplasmic portion of the chain corresponds to 403 to 461 (SDIKRLWYEGLEDFLEESRNQLSFVMNSLYLATFALKVVAHNKFHDFADRKDWDAFHPT). A helical transmembrane segment spans residues 462–482 (LVAEGLFAFANVLSYLRLFFM). Topologically, residues 483–505 (YTTSSILGPLQISMGQMLQDFGK) are extracellular. A helical transmembrane segment spans residues 506-526 (FLGMFLLVLFSFTIGLTQLYD). The Cytoplasmic portion of the chain corresponds to 527 to 552 (KGYTPKEQKDCVGIFCEQQSNDTFHS). Residues 553-573 (FIGTCFALFWYIFSLAHVAIF) traverse the membrane as a helical segment. Residues 574–582 (VTRFSYGEE) lie on the Extracellular side of the membrane. The chain crosses the membrane as a helical span at residues 583 to 603 (LQSFVGAVIVGTYNVVVVIVL). At 604 to 759 (TKLLVAMLHK…SKYAMFYPRN (156 aa)) the chain is on the cytoplasmic side.

Belongs to the transient receptor (TC 1.A.4) family. STrpC subfamily. TRPC1 sub-subfamily. In terms of assembly, homotetramer and heterotetramer with TRPC4 and/or TRPC5. Interacts with TRPC4 and TRPC5. Interacts with ITPR3. Interacts with MX1 and RNF24. Interacts with FKBP4. Interacts with TRPC4AP. Interacts with PLSCR1. Interacts with PKD2L2. Forms a heterotetramer with PKD2 with a 2:2 stoichiometry; has distinct channel properties separate from PKD2 or TRPC1 homomers alone. Post-translationally, activation of PRKCA induces phosphorylation of TRPC1 and subsequent Ca2+ entry into cells.

The protein localises to the cell membrane. It catalyses the reaction Ca(2+)(in) = Ca(2+)(out). In terms of biological role, forms a receptor-activated non-selective calcium permeant cation channel. Probably is operated by a phosphatidylinositol second messenger system activated by receptor tyrosine kinases or G-protein coupled receptors. Also activated by intracellular calcium store depletion. This chain is Short transient receptor potential channel 1 (TRPC1), found in Oryctolagus cuniculus (Rabbit).